The primary structure comprises 152 residues: Nucleoside diphosphate kinase A (152 aa).

ATP contacts are provided by Lys12, Phe60, Arg88, and Thr94. Lys100 is covalently cross-linked (Glycyl lysine isopeptide (Lys-Gly) (interchain with G-Cter in ubiquitin)). ATP-binding residues include Arg105 and Asn115. The Pros-phosphohistidine intermediate role is filled by His118. Phosphoserine occurs at positions 120, 122, and 125.

Belongs to the NDK family. As to quaternary structure, hexamer of two different chains: An and B (A6, A5B, A4B2, A3B3, A2B4, AB5, B6). Interacts with PRUNE1. Component of the SET complex, composed of at least ANP32A, APEX1, HMGB2, NME1, SET and TREX1. Within this complex, interacts directly with SET. Also interacts with TREX1, but only following translocation to the nucleus. Mg(2+) serves as cofactor. As to expression, isoform 1 is expressed in heart, brain, placenta, lung, liver, skeletal muscle, pancreas, spleen and thymus. Expressed in lung carcinoma cell lines but not in normal lung tissues. Isoform 2 is ubiquitously expressed and its expression is also related to tumor differentiation.

It is found in the cytoplasm. Its subcellular location is the nucleus. It carries out the reaction a 2'-deoxyribonucleoside 5'-diphosphate + ATP = a 2'-deoxyribonucleoside 5'-triphosphate + ADP. It catalyses the reaction a ribonucleoside 5'-diphosphate + ATP = a ribonucleoside 5'-triphosphate + ADP. With respect to regulation, autophosphorylation at His-118 increases serine/threonine protein kinase activity of the enzyme. Interaction with the SET complex inhibits the endonuclease activity. Functionally, major role in the synthesis of nucleoside triphosphates other than ATP. The ATP gamma phosphate is transferred to the NDP beta phosphate via a ping-pong mechanism, using a phosphorylated active-site intermediate. Possesses nucleoside-diphosphate kinase, serine/threonine-specific protein kinase, geranyl and farnesyl pyrophosphate kinase, histidine protein kinase and 3'-5' exonuclease activities. Involved in cell proliferation, differentiation and development, signal transduction, G protein-coupled receptor endocytosis, and gene expression. Required for neural development including neural patterning and cell fate determination. During GZMA-mediated cell death, works in concert with TREX1. NME1 nicks one strand of DNA and TREX1 removes bases from the free 3' end to enhance DNA damage and prevent DNA end reannealing and rapid repair. The chain is Nucleoside diphosphate kinase A (NME1) from Homo sapiens (Human).